The sequence spans 287 residues: Bifunctional protein FolD (287 aa).

Residues 166–168 (GAS) and Ile-232 each bind NADP(+).

The protein belongs to the tetrahydrofolate dehydrogenase/cyclohydrolase family. Homodimer.

The enzyme catalyses (6R)-5,10-methylene-5,6,7,8-tetrahydrofolate + NADP(+) = (6R)-5,10-methenyltetrahydrofolate + NADPH. The catalysed reaction is (6R)-5,10-methenyltetrahydrofolate + H2O = (6R)-10-formyltetrahydrofolate + H(+). Its pathway is one-carbon metabolism; tetrahydrofolate interconversion. In terms of biological role, catalyzes the oxidation of 5,10-methylenetetrahydrofolate to 5,10-methenyltetrahydrofolate and then the hydrolysis of 5,10-methenyltetrahydrofolate to 10-formyltetrahydrofolate. This is Bifunctional protein FolD from Pectobacterium atrosepticum (strain SCRI 1043 / ATCC BAA-672) (Erwinia carotovora subsp. atroseptica).